We begin with the raw amino-acid sequence, 986 residues long: Ephrin type-A receptor 4 (986 aa).

Residues 1 to 19 (MAGIFYFILFSFLFGICDA) form the signal peptide. Topologically, residues 20–547 (VTGSRVYPAN…RIIGDGANST (528 aa)) are extracellular. The region spanning 30–209 (EVTLLDSRSV…FYKKCPLTVR (180 aa)) is the Eph LBD domain. N-linked (GlcNAc...) asparagine glycosylation is found at Asn235, Asn340, and Asn408. 2 Fibronectin type-III domains span residues 328-439 (PPSA…TNQA) and 440-537 (APSS…TVPS). Residues 548-569 (VLLVSVSGSVVLVVILIAAFVI) form a helical membrane-spanning segment. Residues 570–986 (SRRRSKYSKA…QQMHGRMVPV (417 aa)) lie on the Cytoplasmic side of the membrane. 2 positions are modified to phosphotyrosine; by autocatalysis: Tyr596 and Tyr602. The Protein kinase domain maps to 621–882 (IKIEKVIGVG…QIVNMLDKLI (262 aa)). Residues 627-635 (IGVGEFGEV) and Lys653 contribute to the ATP site. Catalysis depends on Asp746, which acts as the Proton acceptor. A phosphotyrosine; by autocatalysis mark is found at Tyr779 and Tyr928. Residues 911–975 (SAVVSVGDWL…LSSVQAMRTQ (65 aa)) form the SAM domain. The PDZ-binding motif lies at 984–986 (VPV).

It belongs to the protein kinase superfamily. Tyr protein kinase family. Ephrin receptor subfamily. As to quaternary structure, heterotetramer upon binding of the ligand. The heterotetramer is composed of an ephrin dimer and a receptor dimer. Oligomerization is probably required to induce biological responses. Interacts (phosphorylated at position Tyr-602) with FYN. Interacts (via PDZ motif) with SIPA1L1 (via PDZ domain); controls neuronal morphology through regulation of the RAP1 (RAP1A or RAP1B) and RAP2 (RAP2A, RAP2B or RAP2C) GTPases. Interacts with CDK5, CDK5R1 and NGEF; upon activation by EFNA1 induces NGEF phosphorylation by the kinase CDK5. Interacts with CHN1; effector of EPHA4 in axon guidance linking EPHA4 activation to RAC1 regulation. Forms a ternary complex composed of ADAM10, CADH1 and EPHA4; within the complex, CADH1 is cleaved by ADAM10 which disrupts adherens junctions. As to expression, expressed in inner and outer pillar cells of the organ of Corti (at protein level). Highest expression in the adult brain and retina and also detectable in kidney, lung, skeletal muscle and thymus. Not detected in heart and liver. Expressed in myogenic progenitor cells.

It is found in the cell membrane. It localises to the cell projection. Its subcellular location is the axon. The protein localises to the dendrite. The protein resides in the postsynaptic density membrane. It is found in the early endosome. It localises to the cell junction. Its subcellular location is the adherens junction. The enzyme catalyses L-tyrosyl-[protein] + ATP = O-phospho-L-tyrosyl-[protein] + ADP + H(+). Its function is as follows. Receptor tyrosine kinase which binds membrane-bound ephrin family ligands residing on adjacent cells, leading to contact-dependent bidirectional signaling into neighboring cells. The signaling pathway downstream of the receptor is referred to as forward signaling while the signaling pathway downstream of the ephrin ligand is referred to as reverse signaling. Highly promiscuous, it has the unique property among Eph receptors to bind and to be physiologically activated by both GPI-anchored ephrin-A and transmembrane ephrin-B ligands including EFNA1 and EFNB3. Upon activation by ephrin ligands, modulates cell morphology and integrin-dependent cell adhesion through regulation of the Rac, Rap and Rho GTPases activity. Plays an important role in the development of the nervous system controlling different steps of axonal guidance including the establishment of the corticospinal projections. May also control the segregation of motor and sensory axons during neuromuscular circuit developmen. In addition to its role in axonal guidance plays a role in synaptic plasticity. Activated by EFNA1 phosphorylates CDK5 at 'Tyr-15' which in turn phosphorylates NGEF regulating RHOA and dendritic spine morphogenesis. In the nervous system, also plays a role in repair after injury preventing axonal regeneration and in angiogenesis playing a role in central nervous system vascular formation. Additionally, its promiscuity makes it available to participate in a variety of cell-cell signaling regulating for instance the development of the thymic epithelium. During development of the cochlear organ of Corti, regulates pillar cell separation by forming a ternary complex with ADAM10 and CADH1 which facilitates the cleavage of CADH1 by ADAM10 and disruption of adherens junctions. Phosphorylates CAPRIN1, promoting CAPRIN1-dependent formation of a membraneless compartment. The protein is Ephrin type-A receptor 4 (Epha4) of Mus musculus (Mouse).